Reading from the N-terminus, the 253-residue chain is Zinc import ATP-binding protein ZnuC (253 aa).

The ABC transporter domain occupies 6–227 (VTLNKISVTF…FGNRGAEQLA (222 aa)). Position 38-45 (38-45 (GPNGAGKS)) interacts with ATP.

This sequence belongs to the ABC transporter superfamily. Zinc importer (TC 3.A.1.15.5) family. In terms of assembly, the complex is composed of two ATP-binding proteins (ZnuC), two transmembrane proteins (ZnuB) and a solute-binding protein (ZnuA).

It is found in the cell inner membrane. It carries out the reaction Zn(2+)(out) + ATP(in) + H2O(in) = Zn(2+)(in) + ADP(in) + phosphate(in) + H(+)(in). Functionally, part of the ABC transporter complex ZnuABC involved in zinc import. Responsible for energy coupling to the transport system. The protein is Zinc import ATP-binding protein ZnuC of Yersinia pestis bv. Antiqua (strain Antiqua).